The sequence spans 361 residues: DNA replication and repair protein RecF (361 aa).

ATP is bound at residue 30–37 (GANGSGKT).

The protein belongs to the RecF family.

The protein localises to the cytoplasm. The RecF protein is involved in DNA metabolism; it is required for DNA replication and normal SOS inducibility. RecF binds preferentially to single-stranded, linear DNA. It also seems to bind ATP. The polypeptide is DNA replication and repair protein RecF (Pectobacterium atrosepticum (strain SCRI 1043 / ATCC BAA-672) (Erwinia carotovora subsp. atroseptica)).